The chain runs to 476 residues: Adenosylhomocysteinase (476 aa).

Substrate-binding residues include Thr-67, Asp-142, and Glu-202. An NAD(+)-binding site is contributed by 203–205 (TTT). Substrate-binding residues include Lys-232 and Asp-236. NAD(+)-binding positions include Asn-237, 266–271 (GYGDVG), Glu-289, Asn-324, 345–347 (IGH), and Asn-390.

Belongs to the adenosylhomocysteinase family. The cofactor is NAD(+).

It is found in the cytoplasm. The catalysed reaction is S-adenosyl-L-homocysteine + H2O = L-homocysteine + adenosine. It participates in amino-acid biosynthesis; L-homocysteine biosynthesis; L-homocysteine from S-adenosyl-L-homocysteine: step 1/1. In terms of biological role, may play a key role in the regulation of the intracellular concentration of adenosylhomocysteine. The sequence is that of Adenosylhomocysteinase from Prochlorococcus marinus (strain SARG / CCMP1375 / SS120).